Reading from the N-terminus, the 255-residue chain is Ribonuclease HII (255 aa).

One can recognise an RNase H type-2 domain in the interval N72 to E255. A divalent metal cation-binding residues include D78, E79, and D170.

This sequence belongs to the RNase HII family. Requires Mn(2+) as cofactor. Mg(2+) serves as cofactor.

It localises to the cytoplasm. The enzyme catalyses Endonucleolytic cleavage to 5'-phosphomonoester.. Its function is as follows. Endonuclease that specifically degrades the RNA of RNA-DNA hybrids. This Ruminiclostridium cellulolyticum (strain ATCC 35319 / DSM 5812 / JCM 6584 / H10) (Clostridium cellulolyticum) protein is Ribonuclease HII.